A 108-amino-acid polypeptide reads, in one-letter code: uncharacterized protein (108 aa).

Intrachain disulfides connect C44–C82, C60–C78, and C63–C91.

The protein belongs to the arthropod CHH/MIH/GIH/VIH hormone family.

This is an uncharacterized protein from Caenorhabditis elegans.